The primary structure comprises 188 residues: MTRVVLSVGSNLGDRLARLRSVADGLGDALIAASPIYEADPWGGVEQGQFLNAVLIADDPTCEPREWLRRAQEFERAAGRVRGQRWGPRNLDVDLIACYQTSATEALVEVTARENHLTLPHPLAHLRAFVLIPWIAVDPTAQLTVAGCPRPVTRLLAELEPADRDSVRLFRPSFDLNSRHPVSRAPES.

The protein belongs to the HPPK family.

The catalysed reaction is 6-hydroxymethyl-7,8-dihydropterin + ATP = (7,8-dihydropterin-6-yl)methyl diphosphate + AMP + H(+). It functions in the pathway cofactor biosynthesis; tetrahydrofolate biosynthesis; 2-amino-4-hydroxy-6-hydroxymethyl-7,8-dihydropteridine diphosphate from 7,8-dihydroneopterin triphosphate: step 4/4. In terms of biological role, catalyzes the transfer of pyrophosphate from adenosine triphosphate (ATP) to 6-hydroxymethyl-7,8-dihydropterin, an enzymatic step in folate biosynthesis pathway. The polypeptide is 2-amino-4-hydroxy-6-hydroxymethyldihydropteridine pyrophosphokinase (folK) (Mycobacterium tuberculosis (strain ATCC 25618 / H37Rv)).